Consider the following 206-residue polypeptide: Endoplasmic reticulum transmembrane protein 1 (206 aa).

The Lumenal portion of the chain corresponds to 1–7 (MSLYFTT). The chain crosses the membrane as a helical span at residues 8–28 (LFLLLTVEMVMLFIFVLPLPF). Over 29-45 (RIRRGIFSTYNQLTAKQ) the chain is Cytoplasmic. Residues 46-66 (QIKTIIFITGCLVGLLFIDSW) traverse the membrane as a helical segment. The Lumenal portion of the chain corresponds to 67–104 (KRSQIRVSLYHNDNSGSIGSSAVTPIQALASRAYNQRN). Residues 105–125 (MYISGFILYFSICIPTVMSIV) form a helical membrane-spanning segment. Topologically, residues 126–206 (KRLVKYQGLI…AAAEASKKGN (81 aa)) are cytoplasmic. Residues 140–163 (KQKLNKPSSNSKKDSNEADSTKLQ) form a disordered region. Residues 150 to 163 (SKKDSNEADSTKLQ) show a composition bias toward basic and acidic residues. Residue lysine 190 forms a Glycyl lysine isopeptide (Lys-Gly) (interchain with G-Cter in ubiquitin) linkage. Residues 203-206 (KKGN) carry the Di-lysine motif motif.

The protein belongs to the BCAP29/BCAP31 family.

It localises to the endoplasmic reticulum membrane. Its function is as follows. May play a role in anterograde transport of membrane proteins from the endoplasmic reticulum to the Golgi. In Saccharomyces cerevisiae (strain ATCC 204508 / S288c) (Baker's yeast), this protein is Endoplasmic reticulum transmembrane protein 1 (YET1).